The primary structure comprises 61 residues: UPF0181 protein MS1074 (61 aa).

Belongs to the UPF0181 family.

In Mannheimia succiniciproducens (strain KCTC 0769BP / MBEL55E), this protein is UPF0181 protein MS1074.